Consider the following 446-residue polypeptide: Transcriptional regulator STERILE APETALA (446 aa).

Positions 1–10 are enriched in low complexity; sequence MSTSSSSSDN. The segment at 1-32 is disordered; the sequence is MSTSSSSSDNGAGGSGGVFEAPSPSRPRRGAN.

Expressed in inflorescence and floral meristems, young floral organ primordia, and later in ovule primordia.

It is found in the nucleus. Functionally, transcriptional regulator involved in the specification of floral identity. Acts as A class cadastral protein by repressing the C class floral homeotic gene AGAMOUS in the external flower organs in association with APETALA2 and other repressors. Is required to maintain floral meristem identity in concert with AGAMOUS. Also interacts with APETALA2 to ensure the normal development of ovule. This is Transcriptional regulator STERILE APETALA (SAP) from Arabidopsis thaliana (Mouse-ear cress).